The chain runs to 276 residues: Dermonecrotic toxin LlSicTox-alphaIV3 (276 aa).

Residue His-5 is part of the active site. Mg(2+) is bound by residues Glu-25 and Asp-27. Catalysis depends on His-41, which acts as the Nucleophile. Disulfide bonds link Cys-45–Cys-51 and Cys-47–Cys-192. Asp-85 is a binding site for Mg(2+).

It belongs to the arthropod phospholipase D family. Class II subfamily. It depends on Mg(2+) as a cofactor. In terms of tissue distribution, expressed by the venom gland.

Its subcellular location is the secreted. The enzyme catalyses an N-(acyl)-sphingosylphosphocholine = an N-(acyl)-sphingosyl-1,3-cyclic phosphate + choline. It catalyses the reaction an N-(acyl)-sphingosylphosphoethanolamine = an N-(acyl)-sphingosyl-1,3-cyclic phosphate + ethanolamine. It carries out the reaction a 1-acyl-sn-glycero-3-phosphocholine = a 1-acyl-sn-glycero-2,3-cyclic phosphate + choline. The catalysed reaction is a 1-acyl-sn-glycero-3-phosphoethanolamine = a 1-acyl-sn-glycero-2,3-cyclic phosphate + ethanolamine. Functionally, dermonecrotic toxins cleave the phosphodiester linkage between the phosphate and headgroup of certain phospholipids (sphingolipid and lysolipid substrates), forming an alcohol (often choline) and a cyclic phosphate. This toxin acts on sphingomyelin (SM). It may also act on ceramide phosphoethanolamine (CPE), lysophosphatidylcholine (LPC) and lysophosphatidylethanolamine (LPE), but not on lysophosphatidylserine (LPS), and lysophosphatidylglycerol (LPG). It acts by transphosphatidylation, releasing exclusively cyclic phosphate products as second products. Induces dermonecrosis, hemolysis, increased vascular permeability, edema, inflammatory response, and platelet aggregation. This is Dermonecrotic toxin LlSicTox-alphaIV3 from Loxosceles laeta (South American recluse spider).